Here is a 133-residue protein sequence, read N- to C-terminus: Profilin (133 aa).

The protein belongs to the profilin family. Occurs in many kinds of cells as a complex with monomeric actin in a 1:1 ratio.

The protein resides in the cytoplasm. The protein localises to the cytoskeleton. Functionally, binds to actin and affects the structure of the cytoskeleton. At high concentrations, profilin prevents the polymerization of actin, whereas it enhances it at low concentrations. By binding to PIP2, it inhibits the formation of IP3 and DG. The polypeptide is Profilin (Helianthus annuus (Common sunflower)).